Consider the following 393-residue polypeptide: GDSL esterase/lipase At1g28600 (393 aa).

The first 22 residues, 1–22 (MASLDSLVIFLFSTLFVTIVSS), serve as a signal peptide directing secretion. Residue S38 is the Nucleophile of the active site. 2 N-linked (GlcNAc...) asparagine glycosylation sites follow: N133 and N317. Residues D340 and H343 contribute to the active site. An N-linked (GlcNAc...) asparagine glycan is attached at N382.

This sequence belongs to the 'GDSL' lipolytic enzyme family.

The protein localises to the secreted. The protein is GDSL esterase/lipase At1g28600 of Arabidopsis thaliana (Mouse-ear cress).